An 82-amino-acid chain; its full sequence is Turripeptide OL139 (82 aa).

Residues 58 to 82 (HRTTRDTADKTHGGSQRDRFFQSIA) form a disordered region.

In terms of processing, contains 6 disulfide bonds. In terms of tissue distribution, expressed by the venom duct.

It is found in the secreted. Functionally, acts as a neurotoxin by inhibiting an ion channel. This is Turripeptide OL139 from Iotyrris olangoensis (Sea snail).